Here is a 632-residue protein sequence, read N- to C-terminus: tRNA uridine 5-carboxymethylaminomethyl modification enzyme MnmG (632 aa).

An FAD-binding site is contributed by 13-18; that stretch reads GGGHAG. 273-287 is an NAD(+) binding site; that stretch reads GPRYCPSIEDKIHRF.

This sequence belongs to the MnmG family. As to quaternary structure, homodimer. Heterotetramer of two MnmE and two MnmG subunits. FAD is required as a cofactor.

The protein localises to the cytoplasm. NAD-binding protein involved in the addition of a carboxymethylaminomethyl (cmnm) group at the wobble position (U34) of certain tRNAs, forming tRNA-cmnm(5)s(2)U34. This is tRNA uridine 5-carboxymethylaminomethyl modification enzyme MnmG from Psychrobacter arcticus (strain DSM 17307 / VKM B-2377 / 273-4).